Consider the following 151-residue polypeptide: 6,7-dimethyl-8-ribityllumazine synthase (151 aa).

5-amino-6-(D-ribitylamino)uracil is bound by residues phenylalanine 23, 55-57 (AYE), and 79-81 (AVI). 84 to 85 (AT) provides a ligand contact to (2S)-2-hydroxy-3-oxobutyl phosphate. The active-site Proton donor is histidine 87. Phenylalanine 111 is a 5-amino-6-(D-ribitylamino)uracil binding site. A (2S)-2-hydroxy-3-oxobutyl phosphate-binding site is contributed by arginine 125.

The protein belongs to the DMRL synthase family.

It carries out the reaction (2S)-2-hydroxy-3-oxobutyl phosphate + 5-amino-6-(D-ribitylamino)uracil = 6,7-dimethyl-8-(1-D-ribityl)lumazine + phosphate + 2 H2O + H(+). The protein operates within cofactor biosynthesis; riboflavin biosynthesis; riboflavin from 2-hydroxy-3-oxobutyl phosphate and 5-amino-6-(D-ribitylamino)uracil: step 1/2. Its function is as follows. Catalyzes the formation of 6,7-dimethyl-8-ribityllumazine by condensation of 5-amino-6-(D-ribitylamino)uracil with 3,4-dihydroxy-2-butanone 4-phosphate. This is the penultimate step in the biosynthesis of riboflavin. The chain is 6,7-dimethyl-8-ribityllumazine synthase from Leptospira interrogans serogroup Icterohaemorrhagiae serovar Lai (strain 56601).